Reading from the N-terminus, the 142-residue chain is Large ribosomal subunit protein uL13 (142 aa).

The protein belongs to the universal ribosomal protein uL13 family. In terms of assembly, part of the 50S ribosomal subunit.

Functionally, this protein is one of the early assembly proteins of the 50S ribosomal subunit, although it is not seen to bind rRNA by itself. It is important during the early stages of 50S assembly. In Chromohalobacter salexigens (strain ATCC BAA-138 / DSM 3043 / CIP 106854 / NCIMB 13768 / 1H11), this protein is Large ribosomal subunit protein uL13.